The chain runs to 273 residues: Dermonecrotic toxin LarSicTox-alphaIB1aiv (273 aa).

His-5 is an active-site residue. Mg(2+)-binding residues include Glu-25 and Asp-27. The Nucleophile role is filled by His-41. 2 cysteine pairs are disulfide-bonded: Cys-45–Cys-51 and Cys-47–Cys-190. Asp-85 provides a ligand contact to Mg(2+). N-linked (GlcNAc...) asparagine glycosylation is present at Asn-250.

This sequence belongs to the arthropod phospholipase D family. Class II subfamily. It depends on Mg(2+) as a cofactor. Expressed by the venom gland.

It localises to the secreted. It carries out the reaction an N-(acyl)-sphingosylphosphocholine = an N-(acyl)-sphingosyl-1,3-cyclic phosphate + choline. The catalysed reaction is an N-(acyl)-sphingosylphosphoethanolamine = an N-(acyl)-sphingosyl-1,3-cyclic phosphate + ethanolamine. It catalyses the reaction a 1-acyl-sn-glycero-3-phosphocholine = a 1-acyl-sn-glycero-2,3-cyclic phosphate + choline. The enzyme catalyses a 1-acyl-sn-glycero-3-phosphoethanolamine = a 1-acyl-sn-glycero-2,3-cyclic phosphate + ethanolamine. Functionally, dermonecrotic toxins cleave the phosphodiester linkage between the phosphate and headgroup of certain phospholipids (sphingolipid and lysolipid substrates), forming an alcohol (often choline) and a cyclic phosphate. This toxin acts on sphingomyelin (SM). It may also act on ceramide phosphoethanolamine (CPE), lysophosphatidylcholine (LPC) and lysophosphatidylethanolamine (LPE), but not on lysophosphatidylserine (LPS), and lysophosphatidylglycerol (LPG). It acts by transphosphatidylation, releasing exclusively cyclic phosphate products as second products. Induces dermonecrosis, hemolysis, increased vascular permeability, edema, inflammatory response, and platelet aggregation. The polypeptide is Dermonecrotic toxin LarSicTox-alphaIB1aiv (Loxosceles arizonica (Arizona brown spider)).